We begin with the raw amino-acid sequence, 127 residues long: Large ribosomal subunit protein bL12 (127 aa).

It belongs to the bacterial ribosomal protein bL12 family. In terms of assembly, homodimer. Part of the ribosomal stalk of the 50S ribosomal subunit. Forms a multimeric L10(L12)X complex, where L10 forms an elongated spine to which 2 to 4 L12 dimers bind in a sequential fashion. Binds GTP-bound translation factors.

Its function is as follows. Forms part of the ribosomal stalk which helps the ribosome interact with GTP-bound translation factors. Is thus essential for accurate translation. The protein is Large ribosomal subunit protein bL12 of Streptococcus thermophilus (strain CNRZ 1066).